The sequence spans 260 residues: 3'-5' ssDNA/RNA exonuclease TatD (260 aa).

Residues Glu-91, His-127, and His-152 each contribute to the a divalent metal cation site.

The protein belongs to the metallo-dependent hydrolases superfamily. TatD-type hydrolase family. TatD subfamily. Monomer. Mg(2+) is required as a cofactor.

The protein resides in the cytoplasm. Functionally, 3'-5' exonuclease that prefers single-stranded DNA and RNA. May play a role in the H(2)O(2)-induced DNA damage repair. This chain is 3'-5' ssDNA/RNA exonuclease TatD, found in Citrobacter koseri (strain ATCC BAA-895 / CDC 4225-83 / SGSC4696).